Here is a 267-residue protein sequence, read N- to C-terminus: Diacetylchitobiose deacetylase (267 aa).

It belongs to the PIGL family. As to quaternary structure, homohexamer.

The protein resides in the cytoplasm. The catalysed reaction is N,N'-diacetylchitobiose + H2O = beta-D-glucosaminyl-(1-&gt;4)-N-acetyl-D-glucosamine + acetate. Its pathway is glycan degradation; chitin degradation. In terms of biological role, deacylates the non-reducing end of diacetylchitobiose (GlcNAc2). Can also use N-acetylglucosamine (GlcNAc) and N-acetylchitotriose (GlcNAc3). Probably involved in chitin degradation. This is Diacetylchitobiose deacetylase (dac) from Thermococcus kodakarensis (strain ATCC BAA-918 / JCM 12380 / KOD1) (Pyrococcus kodakaraensis (strain KOD1)).